The chain runs to 210 residues: Small ribosomal subunit protein uS3 (210 aa).

In terms of domain architecture, KH type-2 spans 17 to 86; it reads IDEFLEKELR…NPQIDVQEIK (70 aa).

It belongs to the universal ribosomal protein uS3 family. Part of the 30S ribosomal subunit.

In terms of biological role, binds the lower part of the 30S subunit head. The chain is Small ribosomal subunit protein uS3 from Pyrococcus horikoshii (strain ATCC 700860 / DSM 12428 / JCM 9974 / NBRC 100139 / OT-3).